Consider the following 307-residue polypeptide: Probable transposase for transposon Tn903 (307 aa).

Functionally, required for transposition of transposon Tn903. This is Probable transposase for transposon Tn903 from Escherichia coli.